Reading from the N-terminus, the 189-residue chain is Interferon alpha-G (189 aa).

Residues 1 to 23 (MAPAWSLLLALLLLSCNAICSLG) form the signal peptide. Disulfide bonds link cysteine 24–cysteine 122 and cysteine 52–cysteine 162.

This sequence belongs to the alpha/beta interferon family.

It is found in the secreted. Produced by macrophages, IFN-alpha have antiviral activities. Interferon stimulates the production of two enzymes: a protein kinase and an oligoadenylate synthetase. The polypeptide is Interferon alpha-G (IFNAG) (Bos taurus (Bovine)).